The sequence spans 359 residues: UDP-3-O-acylglucosamine N-acyltransferase (359 aa).

The active-site Proton acceptor is H247.

This sequence belongs to the transferase hexapeptide repeat family. LpxD subfamily. In terms of assembly, homotrimer.

The enzyme catalyses a UDP-3-O-[(3R)-3-hydroxyacyl]-alpha-D-glucosamine + a (3R)-hydroxyacyl-[ACP] = a UDP-2-N,3-O-bis[(3R)-3-hydroxyacyl]-alpha-D-glucosamine + holo-[ACP] + H(+). The protein operates within bacterial outer membrane biogenesis; LPS lipid A biosynthesis. Its function is as follows. Catalyzes the N-acylation of UDP-3-O-acylglucosamine using 3-hydroxyacyl-ACP as the acyl donor. Is involved in the biosynthesis of lipid A, a phosphorylated glycolipid that anchors the lipopolysaccharide to the outer membrane of the cell. This Chlorobium chlorochromatii (strain CaD3) protein is UDP-3-O-acylglucosamine N-acyltransferase.